We begin with the raw amino-acid sequence, 92 residues long: Protein AC152 (92 aa).

In terms of biological role, acts as a transactivator of AC102 and HE65 genes. Therefore, participates in the global recruitment of G-actin to the host nucleus. The sequence is that of Protein AC152 (AC152) from Autographa californica nuclear polyhedrosis virus (AcMNPV).